A 447-amino-acid polypeptide reads, in one-letter code: tRNA-2-methylthio-N(6)-dimethylallyladenosine synthase (447 aa).

Residues 10–128 (KLFCISTYGC…FPEYLHRVLQ (119 aa)) enclose the MTTase N-terminal domain. [4Fe-4S] cluster-binding residues include Cys19, Cys55, Cys89, Cys165, Cys169, and Cys172. Residues 151-382 (RKSDVKAFVT…EAINKKVVIK (232 aa)) form the Radical SAM core domain. Positions 384–447 (KEYEGKVVEV…PFSLIGEIVE (64 aa)) constitute a TRAM domain.

This sequence belongs to the methylthiotransferase family. MiaB subfamily. In terms of assembly, monomer. It depends on [4Fe-4S] cluster as a cofactor.

The protein resides in the cytoplasm. The catalysed reaction is N(6)-dimethylallyladenosine(37) in tRNA + (sulfur carrier)-SH + AH2 + 2 S-adenosyl-L-methionine = 2-methylsulfanyl-N(6)-dimethylallyladenosine(37) in tRNA + (sulfur carrier)-H + 5'-deoxyadenosine + L-methionine + A + S-adenosyl-L-homocysteine + 2 H(+). In terms of biological role, catalyzes the methylthiolation of N6-(dimethylallyl)adenosine (i(6)A), leading to the formation of 2-methylthio-N6-(dimethylallyl)adenosine (ms(2)i(6)A) at position 37 in tRNAs that read codons beginning with uridine. The chain is tRNA-2-methylthio-N(6)-dimethylallyladenosine synthase from Clostridium perfringens (strain SM101 / Type A).